The sequence spans 315 residues: Acetaldehyde dehydrogenase (315 aa).

Position 13–16 (13–16 (SGNI)) interacts with NAD(+). Catalysis depends on Cys-143, which acts as the Acyl-thioester intermediate. Residues 174-182 (SAGPGTRKN) and Asn-285 contribute to the NAD(+) site.

This sequence belongs to the acetaldehyde dehydrogenase family.

The catalysed reaction is acetaldehyde + NAD(+) + CoA = acetyl-CoA + NADH + H(+). The polypeptide is Acetaldehyde dehydrogenase (Shewanella woodyi (strain ATCC 51908 / MS32)).